The sequence spans 369 residues: 4-hydroxy-3-methylbut-2-en-1-yl diphosphate synthase (flavodoxin) (369 aa).

The [4Fe-4S] cluster site is built by Cys270, Cys273, Cys305, and Glu312.

The protein belongs to the IspG family. Requires [4Fe-4S] cluster as cofactor.

The enzyme catalyses (2E)-4-hydroxy-3-methylbut-2-enyl diphosphate + oxidized [flavodoxin] + H2O + 2 H(+) = 2-C-methyl-D-erythritol 2,4-cyclic diphosphate + reduced [flavodoxin]. It participates in isoprenoid biosynthesis; isopentenyl diphosphate biosynthesis via DXP pathway; isopentenyl diphosphate from 1-deoxy-D-xylulose 5-phosphate: step 5/6. Its function is as follows. Converts 2C-methyl-D-erythritol 2,4-cyclodiphosphate (ME-2,4cPP) into 1-hydroxy-2-methyl-2-(E)-butenyl 4-diphosphate. This Pseudomonas putida (strain GB-1) protein is 4-hydroxy-3-methylbut-2-en-1-yl diphosphate synthase (flavodoxin).